Reading from the N-terminus, the 398-residue chain is tRNA pseudouridine synthase D (398 aa).

The active-site Nucleophile is aspartate 76. One can recognise a TRUD domain in the interval 151-360; it reads GVPNFFGEQR…MPGERRPLRI (210 aa).

The protein belongs to the pseudouridine synthase TruD family.

The enzyme catalyses uridine(13) in tRNA = pseudouridine(13) in tRNA. Responsible for synthesis of pseudouridine from uracil-13 in transfer RNAs. The protein is tRNA pseudouridine synthase D of Syntrophotalea carbinolica (strain DSM 2380 / NBRC 103641 / GraBd1) (Pelobacter carbinolicus).